Consider the following 137-residue polypeptide: Nucleoside diphosphate kinase (137 aa).

ATP contacts are provided by K9, F57, R85, T91, and R102. Catalysis depends on H119, which acts as the Pros-phosphohistidine intermediate.

The protein belongs to the NDK family. Homotetramer. Requires Mg(2+) as cofactor.

It localises to the cytoplasm. It catalyses the reaction a 2'-deoxyribonucleoside 5'-diphosphate + ATP = a 2'-deoxyribonucleoside 5'-triphosphate + ADP. The catalysed reaction is a ribonucleoside 5'-diphosphate + ATP = a ribonucleoside 5'-triphosphate + ADP. Major role in the synthesis of nucleoside triphosphates other than ATP. The ATP gamma phosphate is transferred to the NDP beta phosphate via a ping-pong mechanism, using a phosphorylated active-site intermediate. The sequence is that of Nucleoside diphosphate kinase from Streptococcus thermophilus (strain CNRZ 1066).